Reading from the N-terminus, the 167-residue chain is C-X-C motif chemokine 15 (167 aa).

Positions 1–25 (MAAQGWSMLLLAVLNLGIFVRPCDT) are cleaved as a signal peptide. Intrachain disulfides connect C30-C57 and C32-C73. S157 carries the post-translational modification Phosphoserine.

It belongs to the intercrine alpha (chemokine CxC) family. As to expression, expression restricted to the lung, produced by bronchoepithelial cells and is released into the airways. Expressed at low levels in fetal lung.

Its subcellular location is the secreted. Functionally, chemotactic for neutrophils. Involved in lung-specific neutrophil trafficking during normal and inflammatory conditions. This chain is C-X-C motif chemokine 15 (Cxcl15), found in Mus musculus (Mouse).